The chain runs to 354 residues: Falstatin (354 aa).

The signal sequence occupies residues 1–21 (MKSITFFVFNICSILALLSHC). The short motif at 226-236 (LEGNAGTGYLW) is the BC loop; binds and inhibits the active site cavity of cysteine proteases element. The interval 274–317 (KYKIDEHDSSKNVNREIESPEQKESDSKPKKPQMQLLGGPDRMR) is disordered. Over residues 275–302 (YKIDEHDSSKNVNREIESPEQKESDSKP) the composition is skewed to basic and acidic residues.

This sequence belongs to the protease inhibitor I71 family. Oligomer; probably composed of 10 monomers. During the liver stage, proteolytically cleaved.

The protein resides in the secreted. It localises to the cytoplasmic vesicle. It is found in the secretory vesicle. Its subcellular location is the microneme. The protein localises to the host cytoplasm. The protein resides in the parasitophorous vacuole lumen. Functionally, cysteine protease inhibitor. Required for the invasion of host erythrocytes by merozoites. In the mosquito vector, essential for the gliding motility of hemocoel sporozoites and, therefore, for salivary gland invasion and the subsequent transmission from the mosquito to the mammalian host. Required for the invasion of host hepatocytes. During the liver stage, may prevent host hepatocyte cell death likely by inhibiting host cysteine proteases. The polypeptide is Falstatin (Plasmodium berghei (strain Anka)).